A 131-amino-acid polypeptide reads, in one-letter code: Sec-independent protein translocase protein TatB (131 aa).

A helical transmembrane segment spans residues 2-22 (LGSLSWEHMLVLVVVGLVVLG). Residues 96 to 131 (AFDRPVNGAAAQPPPAPAPPPEPHRSGQTPFDADAT) form a disordered region. Residues 107 to 116 (QPPPAPAPPP) show a composition bias toward pro residues.

This sequence belongs to the TatB family. As to quaternary structure, the Tat system comprises two distinct complexes: a TatABC complex, containing multiple copies of TatA, TatB and TatC subunits, and a separate TatA complex, containing only TatA subunits. Substrates initially bind to the TatABC complex, which probably triggers association of the separate TatA complex to form the active translocon.

Its subcellular location is the cell membrane. In terms of biological role, part of the twin-arginine translocation (Tat) system that transports large folded proteins containing a characteristic twin-arginine motif in their signal peptide across membranes. Together with TatC, TatB is part of a receptor directly interacting with Tat signal peptides. TatB may form an oligomeric binding site that transiently accommodates folded Tat precursor proteins before their translocation. In Mycolicibacterium paratuberculosis (strain ATCC BAA-968 / K-10) (Mycobacterium paratuberculosis), this protein is Sec-independent protein translocase protein TatB.